Consider the following 736-residue polypeptide: Zinc finger MYND domain-containing protein 15 (736 aa).

2 disordered regions span residues 70–94 (SLGQGAEPGPGPGLGASRLLGDEPP) and 109–192 (LEDG…KNAE). Positions 110-123 (EDGEEGEEEEEDEE) are enriched in acidic residues. Basic and acidic residues-rich tracts occupy residues 124–135 (HGERPGMEKVEP) and 165–185 (ASREEGSREERPEDERAPEKR). Residues cysteine 307, cysteine 310, cysteine 322, cysteine 325, cysteine 331, cysteine 335, histidine 349, and cysteine 353 each contribute to the Zn(2+) site. The MYND-type zinc finger occupies 307–353 (CHVCHKHSFEVKLTPCPQCSAVLYCGEACLQADWRRCPDDVSHRFWC). Disordered regions lie at residues 556 to 583 (DGPEVSLRPGSGVSARFNSGTKEKGGRR) and 696 to 736 (GGTV…RRRR). The segment covering 704 to 718 (GPAPRPPTPAAPPVP) has biased composition (pro residues). Positions 719–736 (ARRRRGEKKAARGPRRRR) are enriched in basic residues.

In terms of assembly, interacts with HDAC1, HDAC3, HDAC6 and, to a lesser extent, with HDAC7. As to expression, testis-specific. Expressed in pachytene spermatocytes and all developing spermatids, but not in Sertoli, nor Leydig cells (at protein level).

Its subcellular location is the nucleus. It is found in the cytoplasm. In terms of biological role, acts as a transcriptional repressor through interaction with histone deacetylases (HDACs). May regulate haploid genes important for spermiogenesis. This chain is Zinc finger MYND domain-containing protein 15 (Zmynd15), found in Mus musculus (Mouse).